The chain runs to 242 residues: B-box zinc finger protein 20 (242 aa).

Residues Cys5, Cys8, Cys28, His33, Cys58, Cys61, Cys81, and His91 each contribute to the Zn(2+) site. The B box-type 1; atypical zinc finger occupies 5-47 (CAVCDKEEASVFCCADEAALCNGCDRHVHFANKLAGKHLRFSL). Residues 58 to 100 (CDICGERRALLFCQEDRAILCRECDIPIHQANEHTKKHNRFLL) form a B box-type 2; atypical zinc finger. The disordered stretch occupies residues 112-153 (YPRASNSNSAAAFGRAKTRPKSVSSEVPSSASNEVFTSSSST). Residues 133–153 (SVSSEVPSSASNEVFTSSSST) are compositionally biased toward low complexity.

As to quaternary structure, interacts with MED25 and COP1. Post-translationally, COP1-mediated ubiquitination and subsequent proteasomal degradation of BBX20 occurs in the dark.

The protein localises to the nucleus. Its function is as follows. Acts as a positive regulator of seedling photomorphogenesis. Plays a negative role in brassinosteroid responses. The protein is B-box zinc finger protein 20 of Arabidopsis thaliana (Mouse-ear cress).